Here is a 192-residue protein sequence, read N- to C-terminus: Pyridoxine/pyridoxamine 5'-phosphate oxidase (192 aa).

FMN-binding positions include 41 to 46, 56 to 57, arginine 62, lysine 63, and glutamine 85; these read RMMLLK and FT. A substrate-binding site is contributed by lysine 46. Substrate-binding residues include tyrosine 103, arginine 107, and serine 111. Residues 120–121 and tryptophan 165 contribute to the FMN site; that span reads QS. Residue 171–173 coordinates substrate; the sequence is RLH. Residue arginine 175 participates in FMN binding.

The protein belongs to the pyridoxamine 5'-phosphate oxidase family. As to quaternary structure, homodimer. Requires FMN as cofactor.

The catalysed reaction is pyridoxamine 5'-phosphate + O2 + H2O = pyridoxal 5'-phosphate + H2O2 + NH4(+). It carries out the reaction pyridoxine 5'-phosphate + O2 = pyridoxal 5'-phosphate + H2O2. Its pathway is cofactor metabolism; pyridoxal 5'-phosphate salvage; pyridoxal 5'-phosphate from pyridoxamine 5'-phosphate: step 1/1. It participates in cofactor metabolism; pyridoxal 5'-phosphate salvage; pyridoxal 5'-phosphate from pyridoxine 5'-phosphate: step 1/1. In terms of biological role, catalyzes the oxidation of either pyridoxine 5'-phosphate (PNP) or pyridoxamine 5'-phosphate (PMP) into pyridoxal 5'-phosphate (PLP). The polypeptide is Pyridoxine/pyridoxamine 5'-phosphate oxidase (Zymomonas mobilis subsp. mobilis (strain ATCC 31821 / ZM4 / CP4)).